The chain runs to 991 residues: UvrABC system protein A (991 aa).

ATP is bound at residue 48-55 (GLSGSGKS). ABC transporter domains lie at 345-624 (WAKS…PKSL) and 644-972 (NHRR…KFLE). ATP is bound at residue 676-683 (GVSGGGKS). The C4-type zinc finger occupies 775–801 (CEACQGDGVIKIEMHFLPDVYVTCDVC).

Belongs to the ABC transporter superfamily. UvrA family. In terms of assembly, forms a heterotetramer with UvrB during the search for lesions.

The protein localises to the cytoplasm. Its function is as follows. The UvrABC repair system catalyzes the recognition and processing of DNA lesions. UvrA is an ATPase and a DNA-binding protein. A damage recognition complex composed of 2 UvrA and 2 UvrB subunits scans DNA for abnormalities. When the presence of a lesion has been verified by UvrB, the UvrA molecules dissociate. The sequence is that of UvrABC system protein A from Bradyrhizobium diazoefficiens (strain JCM 10833 / BCRC 13528 / IAM 13628 / NBRC 14792 / USDA 110).